The primary structure comprises 227 residues: Cytochrome c oxidase subunit 2 (227 aa).

The Mitochondrial intermembrane segment spans residues 1-14 (MAYPMQLGFQDATS). A helical membrane pass occupies residues 15–45 (PIMEELLHFHDHTLMIVFLISSLVLYIISLM). At 46-59 (LTTKLTHTSTMDAQ) the chain is on the mitochondrial matrix side. A helical transmembrane segment spans residues 60–87 (EVETVWTILPAVILIMIALPSLRILYMM). Residues 88 to 227 (DEINNPSLTV…HFEKWSASML (140 aa)) are Mitochondrial intermembrane-facing. Residues H161, C196, E198, C200, H204, and M207 each contribute to the Cu cation site. A Mg(2+)-binding site is contributed by E198.

This sequence belongs to the cytochrome c oxidase subunit 2 family. Component of the cytochrome c oxidase (complex IV, CIV), a multisubunit enzyme composed of 14 subunits. The complex is composed of a catalytic core of 3 subunits MT-CO1, MT-CO2 and MT-CO3, encoded in the mitochondrial DNA, and 11 supernumerary subunits COX4I, COX5A, COX5B, COX6A, COX6B, COX6C, COX7A, COX7B, COX7C, COX8 and NDUFA4, which are encoded in the nuclear genome. The complex exists as a monomer or a dimer and forms supercomplexes (SCs) in the inner mitochondrial membrane with NADH-ubiquinone oxidoreductase (complex I, CI) and ubiquinol-cytochrome c oxidoreductase (cytochrome b-c1 complex, complex III, CIII), resulting in different assemblies (supercomplex SCI(1)III(2)IV(1) and megacomplex MCI(2)III(2)IV(2)). Found in a complex with TMEM177, COA6, COX18, COX20, SCO1 and SCO2. Interacts with TMEM177 in a COX20-dependent manner. Interacts with COX20. Interacts with COX16. It depends on Cu cation as a cofactor.

The protein resides in the mitochondrion inner membrane. It catalyses the reaction 4 Fe(II)-[cytochrome c] + O2 + 8 H(+)(in) = 4 Fe(III)-[cytochrome c] + 2 H2O + 4 H(+)(out). Its function is as follows. Component of the cytochrome c oxidase, the last enzyme in the mitochondrial electron transport chain which drives oxidative phosphorylation. The respiratory chain contains 3 multisubunit complexes succinate dehydrogenase (complex II, CII), ubiquinol-cytochrome c oxidoreductase (cytochrome b-c1 complex, complex III, CIII) and cytochrome c oxidase (complex IV, CIV), that cooperate to transfer electrons derived from NADH and succinate to molecular oxygen, creating an electrochemical gradient over the inner membrane that drives transmembrane transport and the ATP synthase. Cytochrome c oxidase is the component of the respiratory chain that catalyzes the reduction of oxygen to water. Electrons originating from reduced cytochrome c in the intermembrane space (IMS) are transferred via the dinuclear copper A center (CU(A)) of subunit 2 and heme A of subunit 1 to the active site in subunit 1, a binuclear center (BNC) formed by heme A3 and copper B (CU(B)). The BNC reduces molecular oxygen to 2 water molecules using 4 electrons from cytochrome c in the IMS and 4 protons from the mitochondrial matrix. This chain is Cytochrome c oxidase subunit 2 (MT-CO2), found in Tragelaphus imberbis (Lesser kudu).